We begin with the raw amino-acid sequence, 509 residues long: ATP synthase subunit alpha, mitochondrial (509 aa).

171–178 is an ATP binding site; sequence GDRQTGKT.

It belongs to the ATPase alpha/beta chains family. As to quaternary structure, F-type ATPases have 2 components, CF(1) - the catalytic core - and CF(0) - the membrane proton channel. CF(1) has five subunits: alpha(3), beta(3), gamma(1), delta(1), epsilon(1). CF(0) has three main subunits: a, b and c.

The protein resides in the mitochondrion. Its subcellular location is the mitochondrion inner membrane. Functionally, mitochondrial membrane ATP synthase (F(1)F(0) ATP synthase or Complex V) produces ATP from ADP in the presence of a proton gradient across the membrane which is generated by electron transport complexes of the respiratory chain. F-type ATPases consist of two structural domains, F(1) - containing the extramembraneous catalytic core, and F(0) - containing the membrane proton channel, linked together by a central stalk and a peripheral stalk. During catalysis, ATP synthesis in the catalytic domain of F(1) is coupled via a rotary mechanism of the central stalk subunits to proton translocation. Subunits alpha and beta form the catalytic core in F(1). Rotation of the central stalk against the surrounding alpha(3)beta(3) subunits leads to hydrolysis of ATP in three separate catalytic sites on the beta subunits. Subunit alpha does not bear the catalytic high-affinity ATP-binding sites. The polypeptide is ATP synthase subunit alpha, mitochondrial (ATPA) (Oryza sativa subsp. indica (Rice)).